The sequence spans 215 residues: MIKLTARQQQVFDLIRRAIERSGFPPTRAEIAAELGFSSPNAAEEHLRALARKGVIELAAGASRGIRLLGIDDAPHQLTLPHAALMQLSLPLVGRVAAGSPILAQEHISQHYACDPALFSSKPDYLLKVRGLSMRDAGILDGDLLAVQKRTEAKDGQIIVARLGDDVTVKRLKRRPGGVELIAENPDYENIFVKAGSAEFALEGIAVGLIRPGEF.

A DNA-binding region (H-T-H motif) is located at residues 28–48; the sequence is RAEIAAELGFSSPNAAEEHLR. Catalysis depends on for autocatalytic cleavage activity residues serine 133 and lysine 170.

It belongs to the peptidase S24 family. Homodimer.

The enzyme catalyses Hydrolysis of Ala-|-Gly bond in repressor LexA.. Its function is as follows. Represses a number of genes involved in the response to DNA damage (SOS response), including recA and lexA. In the presence of single-stranded DNA, RecA interacts with LexA causing an autocatalytic cleavage which disrupts the DNA-binding part of LexA, leading to derepression of the SOS regulon and eventually DNA repair. The sequence is that of LexA repressor from Burkholderia mallei (strain NCTC 10247).